The sequence spans 133 residues: Ribonuclease P protein component (133 aa).

The protein belongs to the RnpA family. Consists of a catalytic RNA component (M1 or rnpB) and a protein subunit.

It carries out the reaction Endonucleolytic cleavage of RNA, removing 5'-extranucleotides from tRNA precursor.. Functionally, RNaseP catalyzes the removal of the 5'-leader sequence from pre-tRNA to produce the mature 5'-terminus. It can also cleave other RNA substrates such as 4.5S RNA. The protein component plays an auxiliary but essential role in vivo by binding to the 5'-leader sequence and broadening the substrate specificity of the ribozyme. This is Ribonuclease P protein component from Corynebacterium glutamicum (strain R).